We begin with the raw amino-acid sequence, 491 residues long: Anthranilate synthase component 1 (491 aa).

Residues serine 49 and 271-273 each bind L-tryptophan; that span reads PYL. A chorismate-binding site is contributed by 306 to 307; it reads GT. Glutamate 333 provides a ligand contact to Mg(2+). Residues tyrosine 421, arginine 441, 455–457, and glycine 457 each bind chorismate; that span reads GAG. Residue glutamate 470 participates in Mg(2+) binding.

It belongs to the anthranilate synthase component I family. In terms of assembly, heterotetramer consisting of two non-identical subunits: a beta subunit (TrpG) and a large alpha subunit (TrpE). It depends on Mg(2+) as a cofactor.

The catalysed reaction is chorismate + L-glutamine = anthranilate + pyruvate + L-glutamate + H(+). Its pathway is amino-acid biosynthesis; L-tryptophan biosynthesis; L-tryptophan from chorismate: step 1/5. With respect to regulation, feedback inhibited by tryptophan. Its function is as follows. Part of a heterotetrameric complex that catalyzes the two-step biosynthesis of anthranilate, an intermediate in the biosynthesis of L-tryptophan. In the first step, the glutamine-binding beta subunit (TrpG) of anthranilate synthase (AS) provides the glutamine amidotransferase activity which generates ammonia as a substrate that, along with chorismate, is used in the second step, catalyzed by the large alpha subunit of AS (TrpE) to produce anthranilate. In the absence of TrpG, TrpE can synthesize anthranilate directly from chorismate and high concentrations of ammonia. In Neisseria gonorrhoeae (strain ATCC 700825 / FA 1090), this protein is Anthranilate synthase component 1 (trpE).